We begin with the raw amino-acid sequence, 47 residues long: Delta-actitoxin-Axm1g (47 aa).

Disulfide bonds link cysteine 4/cysteine 44, cysteine 6/cysteine 34, and cysteine 27/cysteine 45.

It belongs to the sea anemone sodium channel inhibitory toxin family. Type I subfamily.

It localises to the secreted. Its subcellular location is the nematocyst. This chain is Delta-actitoxin-Axm1g, found in Anthopleura xanthogrammica (Giant green sea anemone).